A 191-amino-acid chain; its full sequence is Leucyl/phenylalanyl-tRNA--protein transferase (191 aa).

The protein belongs to the L/F-transferase family.

The protein localises to the cytoplasm. It catalyses the reaction N-terminal L-lysyl-[protein] + L-leucyl-tRNA(Leu) = N-terminal L-leucyl-L-lysyl-[protein] + tRNA(Leu) + H(+). The enzyme catalyses N-terminal L-arginyl-[protein] + L-leucyl-tRNA(Leu) = N-terminal L-leucyl-L-arginyl-[protein] + tRNA(Leu) + H(+). It carries out the reaction L-phenylalanyl-tRNA(Phe) + an N-terminal L-alpha-aminoacyl-[protein] = an N-terminal L-phenylalanyl-L-alpha-aminoacyl-[protein] + tRNA(Phe). Its function is as follows. Functions in the N-end rule pathway of protein degradation where it conjugates Leu, Phe and, less efficiently, Met from aminoacyl-tRNAs to the N-termini of proteins containing an N-terminal arginine or lysine. In Rubrobacter xylanophilus (strain DSM 9941 / JCM 11954 / NBRC 16129 / PRD-1), this protein is Leucyl/phenylalanyl-tRNA--protein transferase.